Reading from the N-terminus, the 690-residue chain is uncharacterized protein (690 aa).

The tract at residues 553–601 is disordered; the sequence is DESELLENEDKSESLENEDKSESLENEDKSESLENEDKSESLENEKKEK. Residues 560 to 601 show a composition bias toward basic and acidic residues; it reads NEDKSESLENEDKSESLENEDKSESLENEDKSESLENEKKEK.

It belongs to the glycosyltransferase 2 family.

This is an uncharacterized protein from Rickettsia bellii (strain RML369-C).